The primary structure comprises 155 residues: MRIGLGYDVHKLVEDRPLIIGGVTIPHDKGLLGHSDADVLVHAIMDALLGAAALGDIGKHFPDSDKNFKNISSLLLLSKVKDLINKEGYKIVNIDCTIIAQKPKMLYHIDAMKKNICKCLKLDNNMLNIKATTEEGLGFTGKEEGISANAICLLD.

Residues aspartate 8 and histidine 10 each contribute to the a divalent metal cation site. 4-CDP-2-C-methyl-D-erythritol 2-phosphate is bound by residues 8–10 and 34–35; these read DVH and HS. Histidine 42 is a binding site for a divalent metal cation. Residues 56-58, 61-65, 100-106, 132-135, phenylalanine 139, and lysine 142 each bind 4-CDP-2-C-methyl-D-erythritol 2-phosphate; these read DIG, FPDSD, AQKPKML, and TTEE.

It belongs to the IspF family. In terms of assembly, homotrimer. The cofactor is a divalent metal cation.

The catalysed reaction is 4-CDP-2-C-methyl-D-erythritol 2-phosphate = 2-C-methyl-D-erythritol 2,4-cyclic diphosphate + CMP. The protein operates within isoprenoid biosynthesis; isopentenyl diphosphate biosynthesis via DXP pathway; isopentenyl diphosphate from 1-deoxy-D-xylulose 5-phosphate: step 4/6. Involved in the biosynthesis of isopentenyl diphosphate (IPP) and dimethylallyl diphosphate (DMAPP), two major building blocks of isoprenoid compounds. Catalyzes the conversion of 4-diphosphocytidyl-2-C-methyl-D-erythritol 2-phosphate (CDP-ME2P) to 2-C-methyl-D-erythritol 2,4-cyclodiphosphate (ME-CPP) with a corresponding release of cytidine 5-monophosphate (CMP). The sequence is that of 2-C-methyl-D-erythritol 2,4-cyclodiphosphate synthase from Clostridium botulinum (strain Kyoto / Type A2).